A 348-amino-acid polypeptide reads, in one-letter code: Fructose-1,6-bisphosphatase (348 aa).

A Pro/N-degron motif is present at residues 2–5 (PTLV). At Ser-12 the chain carries Phosphoserine. Residues 27–31 (IIEHQ) and 38–42 (TGDFT) each bind AMP. Mg(2+) contacts are provided by Asp-79 and Glu-108. 122–123 (SY) contacts AMP. Mg(2+) contacts are provided by Asp-128, Ile-130, and Asp-131. 131-134 (DGSS) is a binding site for substrate. Arg-150 is a binding site for AMP. Substrate is bound by residues 222-225 (NEGN), 255-260 (RYVGSM), Tyr-276, and 286-288 (KLR). Position 292 (Glu-292) interacts with Mg(2+).

This sequence belongs to the FBPase class 1 family. In terms of assembly, homotetramer. Mg(2+) serves as cofactor. Post-translationally, ubiquitinated. Targeted for proteasomal degradation when cells are shifted to glucose-containing growth medium.

It catalyses the reaction beta-D-fructose 1,6-bisphosphate + H2O = beta-D-fructose 6-phosphate + phosphate. The protein operates within carbohydrate biosynthesis; gluconeogenesis. Subject to complex allosteric regulation. The enzyme can assume an active R-state, or an inactive T-state. Intermediate conformations may exist. AMP acts as allosteric inhibitor. AMP binding affects the turnover of bound substrate and not the affinity for substrate. In Saccharomyces cerevisiae (strain ATCC 204508 / S288c) (Baker's yeast), this protein is Fructose-1,6-bisphosphatase (FBP1).